The primary structure comprises 605 residues: F-box/WD repeat-containing protein pof1 (605 aa).

The region spanning 107–153 is the F-box domain; that stretch reads LDFLSLLPVEISFRILSFLDARSLCQAAQVSKHWKELADDDVIWHRM. The span at 195–212 shows a compositional bias: basic and acidic residues; that stretch reads GVDQAHESSPVKKAKLDD. Positions 195–231 are disordered; it reads GVDQAHESSPVKKAKLDDYPTSSNEETISSVKPPSPN. A compositionally biased stretch (polar residues) spans 214–231; the sequence is PTSSNEETISSVKPPSPN. A phosphoserine mark is found at serine 229 and serine 232. 7 WD repeats span residues 271–299, 311–339, 350–379, 390–420, 432–460, 472–500, and 510–538; these read GHSD…RLWN, GHSS…RIWN, HGHT…KLWH, GHTG…KIWS, AHIG…KQWD, GHIE…KVWE, and NHSE…YLWL.

A part of the E3 ubiquitin ligase Skp1-Cullin-1-F-box (SCF) complex. Interacts with cul1, skp1 and phosphorylated zip1.

The protein resides in the nucleus. Its function is as follows. Probably recognizes and binds to some phosphorylated proteins and promotes their ubiquitination and degradation. Required for the inactivation of zip1 via ubiquitination. This chain is F-box/WD repeat-containing protein pof1 (pof1), found in Schizosaccharomyces pombe (strain 972 / ATCC 24843) (Fission yeast).